A 292-amino-acid polypeptide reads, in one-letter code: Protease HtpX (292 aa).

Transmembrane regions (helical) follow at residues Ile-5 to Val-25 and Ser-34 to Leu-54. A Zn(2+)-binding site is contributed by His-140. The active site involves Glu-141. His-144 contacts Zn(2+). The next 2 helical transmembrane spans lie at Leu-155–Ile-175 and Ile-193–Phe-213. Glu-218 contributes to the Zn(2+) binding site.

This sequence belongs to the peptidase M48B family. Zn(2+) serves as cofactor.

The protein resides in the cell inner membrane. The chain is Protease HtpX from Xanthomonas oryzae pv. oryzae (strain MAFF 311018).